The sequence spans 160 residues: tRNA (cytidine(34)-2'-O)-methyltransferase (160 aa).

Leucine 78, glycine 100, isoleucine 120, and serine 128 together coordinate S-adenosyl-L-methionine.

It belongs to the class IV-like SAM-binding methyltransferase superfamily. RNA methyltransferase TrmH family. TrmL subfamily. As to quaternary structure, homodimer.

The protein localises to the cytoplasm. It carries out the reaction cytidine(34) in tRNA + S-adenosyl-L-methionine = 2'-O-methylcytidine(34) in tRNA + S-adenosyl-L-homocysteine + H(+). The catalysed reaction is 5-carboxymethylaminomethyluridine(34) in tRNA(Leu) + S-adenosyl-L-methionine = 5-carboxymethylaminomethyl-2'-O-methyluridine(34) in tRNA(Leu) + S-adenosyl-L-homocysteine + H(+). In terms of biological role, methylates the ribose at the nucleotide 34 wobble position in the two leucyl isoacceptors tRNA(Leu)(CmAA) and tRNA(Leu)(cmnm5UmAA). Catalyzes the methyl transfer from S-adenosyl-L-methionine to the 2'-OH of the wobble nucleotide. The protein is tRNA (cytidine(34)-2'-O)-methyltransferase of Beijerinckia indica subsp. indica (strain ATCC 9039 / DSM 1715 / NCIMB 8712).